A 446-amino-acid chain; its full sequence is Gasdermin-A (446 aa).

The segment at 1–252 is triggers pyroptosis; sequence MTMFENVTRA…FILIQASDVG (252 aa). 9–13 provides a ligand contact to a cardiolipin; it reads RALAR. Beta stranded transmembrane passes span 78–95, 99–120, 164–180, and 184–198; these read NFSFKNMLDARVEGDVDV, VKVKGTAGLSRSSTLEVQTLSV, VTLERAGKAEGCFSLPF, and LGLQGSVNHKEAVTI.

It belongs to the gasdermin family. Homooligomer; homooligomeric ring-shaped pore complex containing 18-36 subunits when inserted in the membrane. In terms of processing, cleavage by bacterial SpeB relieves autoinhibition by releasing the N-terminal moiety (Gasdermin-A, N-terminal) that initiates pyroptosis. Palmitoylated. In terms of tissue distribution, expressed predominantly in the gastrointestinal (GI) tract and in the skin at a lower level. In the GI tract, the expression is highly restricted to the esophagus and forestomach.

Its subcellular location is the cytoplasm. It is found in the perinuclear region. The protein resides in the cytosol. The protein localises to the cell membrane. The full-length protein before cleavage is inactive: intramolecular interactions between N- and C-terminal domains mediate autoinhibition in the absence of activation signal. The intrinsic pyroptosis-inducing activity is carried by the released N-terminal moiety (Gasdermin-A, N-terminal) following cleavage by bacterial effector protein SpeB. Functionally, this form constitutes the precursor of the pore-forming protein and acts as a sensor of bacterial infection: upon infection, specifically cleaved by bacterial effector protein SpeB in epithelial cells, releasing the N-terminal moiety (Gasdermin-A, N-terminal) that binds to membranes and forms pores, triggering pyroptosis. Pore-forming protein that causes membrane permeabilization and pyroptosis. Released upon cleavage by bacterial effector protein SpeB, and binds to membrane inner leaflet lipids. Homooligomerizes within the membrane and forms pores of 10-15 nanometers (nm) of inner diameter, triggering pyroptosis. Pyroptosis triggers the elimination of the infected skin cell, depriving the pathogen of its protective niche, while inducing an inflammatory response. This ultimately prevents bacterial penetration of the epithelial barrier and a subsequent systemic dissemination of the pathogen. Binds to cardiolipin and other acidic phospholipids, such as phosphatidylserine, which mediate its targeting to the inner leaflet membrane. The sequence is that of Gasdermin-A (Gsdma) from Mus musculus (Mouse).